The following is a 267-amino-acid chain: Hydroxynaphthalene reductase-like protein Arp2 (267 aa).

NADP(+) contacts are provided by isoleucine 25, asparagine 45, aspartate 71, and asparagine 98. Active-site proton donor residues include serine 147 and serine 148. Residues tyrosine 162, lysine 166, valine 195, and threonine 197 each contribute to the NADP(+) site. Tyrosine 162 (proton acceptor) is an active-site residue. Residue lysine 166 is the Lowers pKa of active site Tyr of the active site.

The protein belongs to the short-chain dehydrogenases/reductases (SDR) family.

In terms of biological role, hydroxynaphthalene reductase-like protein; part of the Pks2 gene cluster that mediates the formation of infectious structures (appressoria), enabling these fungi to kill insects faster. The product of the Pks2 gene cluster is different from the one of Pks1 and has still not been identified. This chain is Hydroxynaphthalene reductase-like protein Arp2, found in Metarhizium acridum (strain CQMa 102).